The primary structure comprises 475 residues: Probable dolichyl pyrophosphate Man9GlcNAc2 alpha-1,3-glucosyltransferase (475 aa).

The next 8 membrane-spanning stretches (helical) occupy residues 114–133, 161–181, 235–255, 296–316, 322–342, 385–405, 418–438, and 441–461; these read VVSA…AYSL, GHFQ…AAIL, AVVL…LQAV, MALV…VLLF, VGFL…SFQV, LLVP…CFDS, IANI…TVPA, and KYPD…FFLF.

This sequence belongs to the ALG6/ALG8 glucosyltransferase family.

The protein resides in the endoplasmic reticulum membrane. It catalyses the reaction an alpha-D-Man-(1-&gt;2)-alpha-D-Man-(1-&gt;2)-alpha-D-Man-(1-&gt;3)-[alpha-D-Man-(1-&gt;2)-alpha-D-Man-(1-&gt;3)-[alpha-D-Man-(1-&gt;2)-alpha-D-Man-(1-&gt;6)]-alpha-D-Man-(1-&gt;6)]-beta-D-Man-(1-&gt;4)-beta-D-GlcNAc-(1-&gt;4)-alpha-D-GlcNAc-diphospho-di-trans,poly-cis-dolichol + a di-trans,poly-cis-dolichyl beta-D-glucosyl phosphate = an alpha-D-Glc-(1-&gt;3)-alpha-D-Man-(1-&gt;2)-alpha-D-Man-(1-&gt;2)-alpha-D-Man-(1-&gt;3)-[alpha-D-Man-(1-&gt;2)-alpha-D-Man-(1-&gt;3)-[alpha-D-Man-(1-&gt;2)-alpha-D-Man-(1-&gt;6)]-alpha-D-Man-(1-&gt;6)]-beta-D-Man-(1-&gt;4)-beta-D-GlcNAc-(1-&gt;4)-alpha-D-GlcNAc-diphospho-di-trans,poly-cis-dolichol + a di-trans,poly-cis-dolichyl phosphate + H(+). The protein operates within protein modification; protein glycosylation. Adds the first glucose residue to the lipid-linked oligosaccharide precursor for N-linked glycosylation. Transfers glucose from dolichyl phosphate glucose (Dol-P-Glc) onto the lipid-linked oligosaccharide Man(9)GlcNAc(2)-PP-Dol. Involved in cuticle differentiation. This Drosophila melanogaster (Fruit fly) protein is Probable dolichyl pyrophosphate Man9GlcNAc2 alpha-1,3-glucosyltransferase (gny).